We begin with the raw amino-acid sequence, 317 residues long: Protein CbxX, chromosomal (317 aa).

Residues 1 to 21 (MSAPETTAPLQPPAAPAASLP) form a disordered region. 85–92 (GNPGTGKT) is an ATP binding site.

Belongs to the CbxX/CfxQ family.

Seems to be necessary for the expression of RuBisCO. This Cupriavidus necator (strain ATCC 17699 / DSM 428 / KCTC 22496 / NCIMB 10442 / H16 / Stanier 337) (Ralstonia eutropha) protein is Protein CbxX, chromosomal (cbxXC).